A 425-amino-acid chain; its full sequence is GTPase Obg (425 aa).

The Obg domain occupies 1–158 (MFRDSAKIYV…YSLILEMKMI (158 aa)). Residues 159 to 330 (ADVGLVGYPN…LLYAVSETLK (172 aa)) enclose the OBG-type G domain. Residues 165–172 (GYPNVGKS), 190–194 (FTTLV), 212–215 (DIPG), 282–285 (NKMD), and 311–313 (SAA) each bind GTP. The Mg(2+) site is built by S172 and T192. In terms of domain architecture, OCT spans 348–425 (YKVQEEKPFE…IYDTEFDYTR (78 aa)).

The protein belongs to the TRAFAC class OBG-HflX-like GTPase superfamily. OBG GTPase family. Monomer. Mg(2+) is required as a cofactor.

The protein resides in the cytoplasm. An essential GTPase which binds GTP, GDP and possibly (p)ppGpp with moderate affinity, with high nucleotide exchange rates and a fairly low GTP hydrolysis rate. Plays a role in control of the cell cycle, stress response, ribosome biogenesis and in those bacteria that undergo differentiation, in morphogenesis control. This is GTPase Obg from Ruminiclostridium cellulolyticum (strain ATCC 35319 / DSM 5812 / JCM 6584 / H10) (Clostridium cellulolyticum).